Here is a 152-residue protein sequence, read N- to C-terminus: UPF0178 protein Plav_1521 (152 aa).

The interval 114-152 (LRETGQSKGGGPAFSKEDRSRFLRSLEDTVQAIRRRPPP) is disordered. Residues 128–140 (SKEDRSRFLRSLE) are compositionally biased toward basic and acidic residues.

It belongs to the UPF0178 family.

In Parvibaculum lavamentivorans (strain DS-1 / DSM 13023 / NCIMB 13966), this protein is UPF0178 protein Plav_1521.